We begin with the raw amino-acid sequence, 421 residues long: Shaggy-related protein kinase kappa (421 aa).

Over residues 1–10 (MASSGLGNGV) the composition is skewed to gly residues. The segment at 1–60 (MASSGLGNGVGTSRSAKGLKSSSSSVDWLTRDLAETRIRDKVETDDERDSEPDIIDGAGA) is disordered. Residues 29 to 42 (LTRDLAETRIRDKV) show a composition bias toward basic and acidic residues. Over residues 43-54 (ETDDERDSEPDI) the composition is skewed to acidic residues. One can recognise a Protein kinase domain in the interval 83-367 (YISEHVVGTG…ALEACIHPLF (285 aa)). Residues 89 to 97 (VGTGSFGMV) and lysine 112 contribute to the ATP site. Aspartate 208 functions as the Proton acceptor in the catalytic mechanism. At tyrosine 243 the chain carries Phosphotyrosine.

This sequence belongs to the protein kinase superfamily. CMGC Ser/Thr protein kinase family. GSK-3 subfamily. Autophosphorylated mainly on threonine and serine residues. Expressed exclusively in inflorescences.

It catalyses the reaction L-seryl-[protein] + ATP = O-phospho-L-seryl-[protein] + ADP + H(+). It carries out the reaction L-threonyl-[protein] + ATP = O-phospho-L-threonyl-[protein] + ADP + H(+). In terms of biological role, may mediate extracellular signals to regulate transcription in differentiating cells. The sequence is that of Shaggy-related protein kinase kappa (ASK10) from Arabidopsis thaliana (Mouse-ear cress).